The primary structure comprises 309 residues: Probable manganese-dependent inorganic pyrophosphatase (309 aa).

Residues His9, Asp13, Asp15, Asp75, His97, and Asp149 each coordinate Mn(2+).

It belongs to the PPase class C family. It depends on Mn(2+) as a cofactor.

The protein resides in the cytoplasm. The enzyme catalyses diphosphate + H2O = 2 phosphate + H(+). This is Probable manganese-dependent inorganic pyrophosphatase from Bacillus velezensis (strain DSM 23117 / BGSC 10A6 / LMG 26770 / FZB42) (Bacillus amyloliquefaciens subsp. plantarum).